The primary structure comprises 191 residues: Vascular endothelial growth factor A (191 aa).

Residues 1-26 form the signal peptide; it reads MNFLLTWIHWGLAALLYFHNAKVLQA. 3 disulfide bridges follow: Cys-52–Cys-94, Cys-83–Cys-128, and Cys-87–Cys-130. The N-linked (GlcNAc...) asparagine glycan is linked to Asn-101.

The protein belongs to the PDGF/VEGF growth factor family. Homodimer; disulfide-linked. Also found as heterodimer with PGF. As to expression, expressed by the venom gland, and probably other tissues.

Its subcellular location is the secreted. In terms of biological role, growth factor active in angiogenesis, vasculogenesis and endothelial cell growth. Induces endothelial cell proliferation, promotes cell migration, inhibits apoptosis and induces permeabilization of blood vessels. Binds to heparan sulfate and heparin. The sequence is that of Vascular endothelial growth factor A from Bitis gabonica (Gaboon adder).